The following is a 470-amino-acid chain: Nitric oxide synthase, inducible (470 aa).

Residues tryptophan 2, tyrosine 3, and glutamate 7 each contribute to the L-arginine site. Residues arginine 11, tryptophan 93, and phenylalanine 106 each coordinate (6R)-L-erythro-5,6,7,8-tetrahydrobiopterin. Tyrosine 121 lines the heme b pocket. Residues 145-165 are calmodulin-binding; that stretch reads FKAVARAALFSSTLMSRVLAN. The region spanning 169–307 is the Flavodoxin-like domain; sequence CTVLYATETG…AFSAWALTAL (139 aa). The FMN site is built by threonine 175, glutamate 176, threonine 177, lysine 179, serine 180, serine 221, threonine 222, serine 258, cysteine 265, glutamate 291, and glutamine 295. An NADP(+)-binding site is contributed by arginine 380. Residue histidine 403 participates in FAD binding. Threonine 440 lines the NADP(+) pocket.

The protein belongs to the NOS family. Homodimer. The cofactor is heme b. FAD is required as a cofactor. It depends on FMN as a cofactor. Requires (6R)-L-erythro-5,6,7,8-tetrahydrobiopterin as cofactor.

The protein resides in the cytoplasm. Its subcellular location is the cytosol. It carries out the reaction 2 L-arginine + 3 NADPH + 4 O2 + H(+) = 2 L-citrulline + 2 nitric oxide + 3 NADP(+) + 4 H2O. With respect to regulation, not stimulated by calcium/calmodulin. Produces nitric oxide (NO) which is a messenger molecule with diverse functions throughout the body. In macrophages, NO mediates tumoricidal and bactericidal actions. Also has nitrosylase activity and mediates cysteine S-nitrosylation of cytoplasmic target proteins such COX2. This Oncorhynchus mykiss (Rainbow trout) protein is Nitric oxide synthase, inducible (nos2).